The following is a 485-amino-acid chain: Ribulose bisphosphate carboxylase large chain 2 (485 aa).

Substrate contacts are provided by Asn-124 and Thr-174. Lys-176 (proton acceptor) is an active-site residue. Lys-178 contributes to the substrate binding site. Lys-202, Asp-204, and Glu-205 together coordinate Mg(2+). The residue at position 202 (Lys-202) is an N6-carboxylysine. The Proton acceptor role is filled by His-294. Substrate is bound by residues Arg-295, His-327, and Ser-379.

The protein belongs to the RuBisCO large chain family. Type I subfamily. As to quaternary structure, heterohexadecamer of 8 large chains and 8 small chains. Mg(2+) is required as a cofactor.

The catalysed reaction is 2 (2R)-3-phosphoglycerate + 2 H(+) = D-ribulose 1,5-bisphosphate + CO2 + H2O. It carries out the reaction D-ribulose 1,5-bisphosphate + O2 = 2-phosphoglycolate + (2R)-3-phosphoglycerate + 2 H(+). Functionally, ruBisCO catalyzes two reactions: the carboxylation of D-ribulose 1,5-bisphosphate, the primary event in carbon dioxide fixation, as well as the oxidative fragmentation of the pentose substrate. Both reactions occur simultaneously and in competition at the same active site. The protein is Ribulose bisphosphate carboxylase large chain 2 of Rhodopseudomonas palustris (strain BisB5).